Here is a 321-residue protein sequence, read N- to C-terminus: NADH-ubiquinone oxidoreductase chain 1 (321 aa).

Transmembrane regions (helical) follow at residues 7–27 (ITNS…LTLM), 73–93 (ILLI…WTPI), 104–124 (LGLL…LWAG), 148–168 (VTLG…TMQL), 175–195 (HTWL…STLA), 227–247 (FFLA…ILFI), 256–276 (ELFL…FLWI), and 297–317 (LPLT…ISGI).

It belongs to the complex I subunit 1 family.

The protein localises to the mitochondrion inner membrane. The catalysed reaction is a ubiquinone + NADH + 5 H(+)(in) = a ubiquinol + NAD(+) + 4 H(+)(out). Core subunit of the mitochondrial membrane respiratory chain NADH dehydrogenase (Complex I) that is believed to belong to the minimal assembly required for catalysis. Complex I functions in the transfer of electrons from NADH to the respiratory chain. The immediate electron acceptor for the enzyme is believed to be ubiquinone. In Varanus dumerilii (Dumeril's monitor), this protein is NADH-ubiquinone oxidoreductase chain 1 (MT-ND1).